We begin with the raw amino-acid sequence, 224 residues long: Octanoyl-[acyl-carrier-protein]:protein N-octanoyltransferase LIPT2, mitochondrial (224 aa).

Residues 37–217 (SNIPNTLLLC…AFTEQFNCTL (181 aa)) form the BPL/LPL catalytic domain. Substrate-binding positions include 81-88 (RGGLITFH), 147-149 (AIG), and 160-162 (GLA). Cys-178 functions as the Acyl-thioester intermediate in the catalytic mechanism.

The protein belongs to the LipB family.

The protein resides in the mitochondrion. It carries out the reaction octanoyl-[ACP] + L-lysyl-[protein] = N(6)-octanoyl-L-lysyl-[protein] + holo-[ACP] + H(+). It functions in the pathway protein modification; protein lipoylation via endogenous pathway; protein N(6)-(lipoyl)lysine from octanoyl-[acyl-carrier-protein]: step 1/2. Its function is as follows. Catalyzes the transfer of endogenously produced octanoic acid from octanoyl-acyl-carrier-protein (octanoyl-ACP) onto the lipoyl domains of lipoate-dependent enzymes such as the protein H of the glycine cleavage system (GCSH). Lipoyl-ACP can also act as a substrate although octanoyl-ACP is likely to be the physiological substrate. This is Octanoyl-[acyl-carrier-protein]:protein N-octanoyltransferase LIPT2, mitochondrial (lipt2) from Danio rerio (Zebrafish).